A 140-amino-acid polypeptide reads, in one-letter code: Large ribosomal subunit protein uL14 (140 aa).

It belongs to the universal ribosomal protein uL14 family.

The chain is Large ribosomal subunit protein uL14 (RPL23) from Brugia malayi (Filarial nematode worm).